We begin with the raw amino-acid sequence, 140 residues long: uncharacterized protein (140 aa).

14 repeat units span residues 1–10 (MFARLCPVSE), 11–20 (TFGRLCPVSE), 21–30 (TFARLCPVSE), 31–40 (TFARLCPVSE), 41–50 (TFARLCPVSE), 51–60 (TFGRLCPVSE), 61–70 (MFGRLSPVSE), 71–80 (TFGRLCPVSE), 81–90 (TFGRLCPVSE), 91–100 (MFARLCPVSE), 101–110 (TFGRLSPVSE), 111–120 (MFGRLCPVSE), 121–130 (MFGRLCPVSE), and 131–140 (MFGRLCPVIT). The interval 1 to 140 (MFARLCPVSE…MFGRLCPVIT (140 aa)) is 14 X 10 AA tandem repeats of [MT]-F-[AG]-R-L-[CS]-P-V-[SI]-[ET].

This is an uncharacterized protein from Homo sapiens (Human).